We begin with the raw amino-acid sequence, 228 residues long: L-ribulose-5-phosphate 4-epimerase UlaF (228 aa).

Substrate contacts are provided by residues 26 to 27, 43 to 44, and 72 to 73; these read GN, SG, and SS. Zn(2+)-binding residues include Asp-74, His-93, and His-95. The Proton donor/acceptor role is filled by Asp-118. His-167 provides a ligand contact to Zn(2+). Catalysis depends on Tyr-225, which acts as the Proton donor/acceptor.

The protein belongs to the aldolase class II family. AraD/FucA subfamily. Zn(2+) is required as a cofactor.

The catalysed reaction is L-ribulose 5-phosphate = D-xylulose 5-phosphate. It participates in cofactor degradation; L-ascorbate degradation; D-xylulose 5-phosphate from L-ascorbate: step 4/4. Catalyzes the isomerization of L-ribulose 5-phosphate to D-xylulose 5-phosphate. Is involved in the anaerobic L-ascorbate utilization. In Escherichia coli (strain SMS-3-5 / SECEC), this protein is L-ribulose-5-phosphate 4-epimerase UlaF.